An 891-amino-acid chain; its full sequence is Microtubule-associated protein 10 (891 aa).

4 disordered regions span residues 325-355 (AAVQ…PPQI), 401-457 (EDKG…VTKG), 504-679 (SWKG…KSSC), and 702-844 (TTEN…SNLS). Over residues 407–417 (PSTKSTSPSES) the composition is skewed to low complexity. Polar residues-rich tracts occupy residues 509 to 520 (VSSSAAESQMSP) and 527 to 544 (PTDS…SQLP). Composition is skewed to basic and acidic residues over residues 577 to 592 (STTK…KQEM) and 645 to 658 (TVDK…DGRQ). Composition is skewed to polar residues over residues 665–679 (ADTS…KSSC), 702–718 (TTEN…SSTG), 726–749 (SRAS…SSVL), 776–790 (EASS…SQWT), and 826–844 (KSQS…SNLS).

In terms of assembly, interacts (via middle region) with microtubules.

The protein localises to the cytoplasm. The protein resides in the cytoskeleton. Its subcellular location is the spindle pole. It localises to the microtubule organizing center. It is found in the centrosome. The protein localises to the midbody. Microtubule-associated protein (MAP) that plays a role in the regulation of cell division; promotes microtubule stability and participates in the organization of the spindle midzone and normal progress of cytokinesis. The sequence is that of Microtubule-associated protein 10 (Map10) from Mus musculus (Mouse).